Here is a 1414-residue protein sequence, read N- to C-terminus: DNA-directed RNA polymerase subunit beta' (1414 aa).

Zn(2+) is bound by residues cysteine 70, cysteine 72, cysteine 85, and cysteine 88. 3 residues coordinate Mg(2+): aspartate 460, aspartate 462, and aspartate 464. 4 residues coordinate Zn(2+): cysteine 815, cysteine 889, cysteine 896, and cysteine 899. Residues 1395–1414 (EAEAQFADISSTPDSDTDAS) are disordered.

The protein belongs to the RNA polymerase beta' chain family. As to quaternary structure, the RNAP catalytic core consists of 2 alpha, 1 beta, 1 beta' and 1 omega subunit. When a sigma factor is associated with the core the holoenzyme is formed, which can initiate transcription. It depends on Mg(2+) as a cofactor. Requires Zn(2+) as cofactor.

It catalyses the reaction RNA(n) + a ribonucleoside 5'-triphosphate = RNA(n+1) + diphosphate. DNA-dependent RNA polymerase catalyzes the transcription of DNA into RNA using the four ribonucleoside triphosphates as substrates. The polypeptide is DNA-directed RNA polymerase subunit beta' (Herminiimonas arsenicoxydans).